The sequence spans 257 residues: Imidazole glycerol phosphate synthase subunit HisF (257 aa).

Residues Asp-12 and Asp-131 contribute to the active site.

It belongs to the HisA/HisF family. As to quaternary structure, heterodimer of HisH and HisF.

The protein resides in the cytoplasm. The catalysed reaction is 5-[(5-phospho-1-deoxy-D-ribulos-1-ylimino)methylamino]-1-(5-phospho-beta-D-ribosyl)imidazole-4-carboxamide + L-glutamine = D-erythro-1-(imidazol-4-yl)glycerol 3-phosphate + 5-amino-1-(5-phospho-beta-D-ribosyl)imidazole-4-carboxamide + L-glutamate + H(+). Its pathway is amino-acid biosynthesis; L-histidine biosynthesis; L-histidine from 5-phospho-alpha-D-ribose 1-diphosphate: step 5/9. In terms of biological role, IGPS catalyzes the conversion of PRFAR and glutamine to IGP, AICAR and glutamate. The HisF subunit catalyzes the cyclization activity that produces IGP and AICAR from PRFAR using the ammonia provided by the HisH subunit. The protein is Imidazole glycerol phosphate synthase subunit HisF of Paraburkholderia xenovorans (strain LB400).